The primary structure comprises 686 residues: Potassium-transporting ATPase ATP-binding subunit (686 aa).

Transmembrane regions (helical) follow at residues 38–58 (VMFV…KDLV) and 64–84 (AAPL…VLFA). The segment at 101-123 (ALRKMRKETTARRWKDGREERVP) is disordered. Over residues 107–123 (KETTARRWKDGREERVP) the composition is skewed to basic and acidic residues. The next 2 helical transmembrane spans lie at 224-244 (ILLV…VPLA) and 257-277 (VALL…AIGI). Catalysis depends on Asp308, which acts as the 4-aspartylphosphate intermediate. ATP-binding positions include Asp345, Glu349, 378–385 (FTAQTRMS), and Lys399. Asp522 and Asp526 together coordinate Mg(2+). 3 helical membrane-spanning segments follow: residues 592–612 (FAIL…LNVM), 620–640 (AVLS…PLAL), and 666–686 (VIVP…VGLA).

It belongs to the cation transport ATPase (P-type) (TC 3.A.3) family. Type IA subfamily. As to quaternary structure, the system is composed of three essential subunits: KdpA, KdpB and KdpC.

Its subcellular location is the cell membrane. The enzyme catalyses K(+)(out) + ATP + H2O = K(+)(in) + ADP + phosphate + H(+). In terms of biological role, part of the high-affinity ATP-driven potassium transport (or Kdp) system, which catalyzes the hydrolysis of ATP coupled with the electrogenic transport of potassium into the cytoplasm. This subunit is responsible for energy coupling to the transport system and for the release of the potassium ions to the cytoplasm. In Myxococcus xanthus, this protein is Potassium-transporting ATPase ATP-binding subunit.